The primary structure comprises 357 residues: Meiotically up-regulated gene 135 protein (357 aa).

This sequence belongs to the UPF0612 family.

The protein resides in the nucleus. In terms of biological role, has a role in meiosis. The sequence is that of Meiotically up-regulated gene 135 protein (mug135) from Schizosaccharomyces pombe (strain 972 / ATCC 24843) (Fission yeast).